A 346-amino-acid chain; its full sequence is S-adenosylmethionine:tRNA ribosyltransferase-isomerase (346 aa).

This sequence belongs to the QueA family. As to quaternary structure, monomer.

The protein resides in the cytoplasm. It catalyses the reaction 7-aminomethyl-7-carbaguanosine(34) in tRNA + S-adenosyl-L-methionine = epoxyqueuosine(34) in tRNA + adenine + L-methionine + 2 H(+). It functions in the pathway tRNA modification; tRNA-queuosine biosynthesis. Its function is as follows. Transfers and isomerizes the ribose moiety from AdoMet to the 7-aminomethyl group of 7-deazaguanine (preQ1-tRNA) to give epoxyqueuosine (oQ-tRNA). This Neisseria gonorrhoeae (strain ATCC 700825 / FA 1090) protein is S-adenosylmethionine:tRNA ribosyltransferase-isomerase.